Here is a 180-residue protein sequence, read N- to C-terminus: Immediate early response gene 2 protein (180 aa).

Residues 53–135 (MSEKSGQSVT…KRRSKTATDS (83 aa)) are disordered. Positions 56–92 (KSGQSVTEECTSHTQEPMDTSSSTATPLRETSGQSSE) are enriched in polar residues. Basic and acidic residues predominate over residues 93–103 (DGQRSGLEGHP).

Belongs to the IER family. As to quaternary structure, interacts with FIBPB.

It is found in the nucleus. Its subcellular location is the cytoplasm. Functionally, DNA-binding protein that seems to act as a transcription factor. Mediates with FIBPB FGF-signaling in Kupffer's vesicle ciliogenesis and in the establishment of laterality in the embryo. This Danio rerio (Zebrafish) protein is Immediate early response gene 2 protein.